The chain runs to 132 residues: Cytochrome c' (132 aa).

Heme c-binding residues include Arg-10, Gln-11, Asp-65, Cys-122, Cys-125, and His-126.

Binds 1 heme c group covalently per subunit.

In terms of biological role, cytochrome c' is the most widely occurring bacterial c-type cytochrome. Cytochromes c' are high-spin proteins and the heme has no sixth ligand. Their exact function is not known. The chain is Cytochrome c' from Halomonas halodenitrificans (strain ATCC 12084 / NCIMB 8669) (Paracoccus halodenitrificans).